The following is a 100-amino-acid chain: Large ribosomal subunit protein bL21 (100 aa).

The protein belongs to the bacterial ribosomal protein bL21 family. As to quaternary structure, part of the 50S ribosomal subunit. Contacts protein L20.

This protein binds to 23S rRNA in the presence of protein L20. This Corynebacterium kroppenstedtii (strain DSM 44385 / JCM 11950 / CIP 105744 / CCUG 35717) protein is Large ribosomal subunit protein bL21.